The primary structure comprises 746 residues: tRNA (cytosine(34)-C(5))-methyltransferase (746 aa).

The disordered stretch occupies residues methionine 1 to glutamine 30. A compositionally biased stretch (basic and acidic residues) spans arginine 18–glutamine 30. Residues cysteine 184–lysine 190, aspartate 216, aspartate 243, and aspartate 270 each bind S-adenosyl-L-methionine. The Nucleophile role is filled by cysteine 323. 2 disordered regions span residues glutamine 454–tryptophan 475 and serine 701–serine 746. Residues alanine 463–serine 472 are compositionally biased toward basic and acidic residues. Residues alanine 704–alanine 714 are compositionally biased toward acidic residues. A compositionally biased stretch (polar residues) spans alanine 731–serine 746.

This sequence belongs to the class I-like SAM-binding methyltransferase superfamily. RsmB/NOP family. TRM4 subfamily. Ubiquitously expressed during embryonic development. Some enrichment is observed in the proventriculus area of the foregut and in the hindgut.

It is found in the nucleus. The protein localises to the nucleolus. The enzyme catalyses cytidine(34) in tRNA precursor + S-adenosyl-L-methionine = 5-methylcytidine(34) in tRNA precursor + S-adenosyl-L-homocysteine + H(+). Its function is as follows. RNA methyltransferase that methylates tRNAs. Methylates cytosine to 5-methylcytosine (m5C) at position 34 of intron-containing tRNA(Leu)(CAA) precursors. Required for short-term memory. The polypeptide is tRNA (cytosine(34)-C(5))-methyltransferase (Drosophila melanogaster (Fruit fly)).